We begin with the raw amino-acid sequence, 565 residues long: NAD-dependent malic enzyme (565 aa).

Residue Tyr104 is the Proton donor of the active site. Arg157 provides a ligand contact to NAD(+). Lys175 acts as the Proton acceptor in catalysis. A divalent metal cation-binding residues include Glu246, Asp247, and Asp270. The NAD(+) site is built by Asp270 and Asn418.

It belongs to the malic enzymes family. Homotetramer. The cofactor is Mg(2+). Mn(2+) is required as a cofactor.

It carries out the reaction (S)-malate + NAD(+) = pyruvate + CO2 + NADH. The enzyme catalyses oxaloacetate + H(+) = pyruvate + CO2. This Escherichia coli O6:H1 (strain CFT073 / ATCC 700928 / UPEC) protein is NAD-dependent malic enzyme.